The sequence spans 379 residues: Eukaryotic translation initiation factor 3 subunit H (379 aa).

In terms of domain architecture, MPN spans 17 to 170 (VQIDSLVVMK…IRAYRLSTKA (154 aa)). Over residues 280-291 (RQAENEQREARG) the composition is skewed to basic and acidic residues. The disordered stretch occupies residues 280 to 300 (RQAENEQREARGEPPLSFDDI).

It belongs to the eIF-3 subunit H family. In terms of assembly, component of the eukaryotic translation initiation factor 3 (eIF-3) complex.

It localises to the cytoplasm. Component of the eukaryotic translation initiation factor 3 (eIF-3) complex, which is involved in protein synthesis of a specialized repertoire of mRNAs and, together with other initiation factors, stimulates binding of mRNA and methionyl-tRNAi to the 40S ribosome. The eIF-3 complex specifically targets and initiates translation of a subset of mRNAs involved in cell proliferation. The chain is Eukaryotic translation initiation factor 3 subunit H from Brugia malayi (Filarial nematode worm).